The sequence spans 148 residues: Transcriptional repressor NrdR (148 aa).

A zinc finger spans residues 3–32; the sequence is CPKCSSEESKVVDSRQAEDAIRRRRVCESC. An ATP-cone domain is found at 47–137; the sequence is LLVIKKDDKR…VYRSFKDVSE (91 aa).

Belongs to the NrdR family. Requires Zn(2+) as cofactor.

In terms of biological role, negatively regulates transcription of bacterial ribonucleotide reductase nrd genes and operons by binding to NrdR-boxes. In Lactococcus lactis subsp. lactis (strain IL1403) (Streptococcus lactis), this protein is Transcriptional repressor NrdR.